The chain runs to 403 residues: NADH-quinone oxidoreductase subunit D (403 aa).

Belongs to the complex I 49 kDa subunit family. NDH-1 is composed of 14 different subunits. Subunits NuoB, C, D, E, F, and G constitute the peripheral sector of the complex.

The protein localises to the cell inner membrane. The catalysed reaction is a quinone + NADH + 5 H(+)(in) = a quinol + NAD(+) + 4 H(+)(out). Its function is as follows. NDH-1 shuttles electrons from NADH, via FMN and iron-sulfur (Fe-S) centers, to quinones in the respiratory chain. The immediate electron acceptor for the enzyme in this species is believed to be ubiquinone. Couples the redox reaction to proton translocation (for every two electrons transferred, four hydrogen ions are translocated across the cytoplasmic membrane), and thus conserves the redox energy in a proton gradient. This chain is NADH-quinone oxidoreductase subunit D, found in Erythrobacter litoralis (strain HTCC2594).